Here is a 171-residue protein sequence, read N- to C-terminus: Iron-sulfur cluster assembly protein 1 (171 aa).

A mitochondrion-targeting transit peptide spans 1-55 (MLRAGGRRLLAPGLRRVLGGGAAAPVAVGGAKAYHERVVDHYENPRNVGSFENDD).

It belongs to the NifU family. As to quaternary structure, component of the core Fe-S cluster (ISC) assembly machinery. [2Fe-2S] cluster is required as a cofactor.

Its subcellular location is the mitochondrion matrix. It participates in cofactor biosynthesis; iron-sulfur cluster biosynthesis. In terms of biological role, scaffold protein for the de novo synthesis of iron-sulfur (Fe-S) clusters within mitochondria, which is required for maturation of both mitochondrial and cytoplasmic [2Fe-2S] and [4Fe-4S] proteins. First, a [2Fe-2S] cluster is transiently assembled on the scaffold protein ISCU (ISU1, ISU2 or ISU3). In a second step, the cluster is released from ISCU, transferred to a glutaredoxin, followed by the formation of mitochondrial [2Fe-2S] proteins, the synthesis of [4Fe-4S] clusters and their target-specific insertion into the recipient apoproteins. Cluster assembly on ISCU depends on the function of the cysteine desulfurase complex NFS1-ISD11, which serves as the sulfur donor for cluster synthesis, the iron-binding protein frataxin as the putative iron donor, and the electron transfer chain comprised of ferredoxin reductase and ferredoxin, which receive their electrons from NADH. In Oryza sativa subsp. japonica (Rice), this protein is Iron-sulfur cluster assembly protein 1.